The following is a 971-amino-acid chain: Piwi-like protein 2 (971 aa).

Arg45 bears the Symmetric dimethylarginine mark. Residue Arg74 is modified to Omega-N-methylarginine; by PRMT5; alternate. A Symmetric dimethylarginine; by PRMT5; alternate modification is found at Arg74. At Arg83 the chain carries Omega-N-methylarginine; alternate. Symmetric dimethylarginine; alternate occurs at positions 83 and 95. Arg95 carries the post-translational modification Omega-N-methylarginine; by PRMT5; alternate. Position 100 is a symmetric dimethylarginine; by PRMT5; alternate (Arg100). Arg100 bears the Omega-N-methylarginine; alternate mark. Residues 102-124 form a disordered region; that stretch reads LSANMVRKDREEPRSSLPDPSVL. Residues Arg144 and Arg156 each carry the symmetric dimethylarginine modification. Residues 159–200 are disordered; sequence SSIGRGMDKPPSAFGLTARDPPRLPQPPALSPTSLHSADPPP. Residue Arg163 is modified to Symmetric dimethylarginine; by PRMT5. The PAZ domain occupies 387–500; that stretch reads SVLDVMHAIY…LLPELSFMTG (114 aa). The residue at position 549 (Arg549) is a Symmetric dimethylarginine; by PRMT5. Residues 666–957 form the Piwi domain; that stretch reads MVVCIIMGTR…LAFLSGQILH (292 aa). Active-site residues include Asp743, Glu781, Asp813, and His946.

It belongs to the argonaute family. Piwi subfamily. As to quaternary structure, interacts with DDX4, MAEL, EIF3A, EIF4E, EIF4G, PRMT5 and WDR77. Associates with EIF4E- and EIF4G-containing m7G cap-binding complexes. Interacts (when methylated on arginine residues) with TDRD1 and TDRKH/TDRD2. Interacts with TDRD12. Component of the PET complex, at least composed of EXD1, PIWIL2, TDRD12 and piRNAs. Interacts with MOV10L1. Interacts with GPAT2. Interacts with Tex19.1 and, probably, Tex19.2. Interacts (via PIWI domain) with BMAL1 and CLOCK. Interacts with GSK3B. Interacts with TEX15. Requires Mg(2+) as cofactor. In terms of processing, arginine methylation by PRMT5 is required for the interaction with Tudor domain-containing protein TDRD1 and subsequent localization to the meiotic nuage, also named P granule. Expressed in adult testis, specifically in spermatocytes and in spermatogonia. Only detected in primordial germ cells of both sexes. Widely expressed in tumors. Also present at early stages of oocyte growth. Present in the mitotic spermatogonia. Not detected in the first stages of meiosis (preleptotene and leptotene). Detected at the late zygotene stage and increases throughout pachytene, declining from this stage onward until expression stops at the early round spermatid stage (at protein level).

It is found in the cytoplasm. Its function is as follows. Endoribonuclease that plays a central role during spermatogenesis by repressing transposable elements and preventing their mobilization, which is essential for the germline integrity. Plays an essential role in meiotic differentiation of spermatocytes, germ cell differentiation and in self-renewal of spermatogonial stem cells. Its presence in oocytes suggests that it may participate in similar functions during oogenesis in females. Acts via the piRNA metabolic process, which mediates the repression of transposable elements during meiosis by forming complexes composed of piRNAs and Piwi proteins and govern the methylation and subsequent repression of transposons. During piRNA biosynthesis, plays a key role in the piRNA amplification loop, also named ping-pong amplification cycle, by acting as a 'slicer-competent' piRNA endoribonuclease that cleaves primary piRNAs, which are then loaded onto 'slicer-incompetent' PIWIL4. PIWIL2 slicing produces a pre-miRNA intermediate, which is then processed in mature piRNAs, and as well as a 16 nucleotide by-product that is degraded. Required for PIWIL4/MIWI2 nuclear localization and association with secondary piRNAs antisense. Besides their function in transposable elements repression, piRNAs are probably involved in other processes during meiosis such as translation regulation. Indirectly modulates expression of genes such as PDGFRB, SLC2A1, ITGA6, GJA7, THY1, CD9 and STRA8. Represses circadian rhythms by promoting the stability and activity of core clock components BMAL1 and CLOCK by inhibiting GSK3B-mediated phosphorylation and ubiquitination-dependent degradation of these proteins. The chain is Piwi-like protein 2 from Mus musculus (Mouse).